We begin with the raw amino-acid sequence, 220 residues long: uncharacterized protein (220 aa).

4 helical membrane passes run 61-81, 85-105, 115-135, and 150-170; these read LISVLTIPFYVAIIIFISFFG, SVMFSVIILGSVLISTCYGAF, FVIIQLVFLIYDLILITILLL, and LPLEDIPFGTDQVLLGCSLLL.

It localises to the membrane. This is an uncharacterized protein from Caenorhabditis elegans.